A 91-amino-acid chain; its full sequence is Sec-independent protein translocase protein TatA (91 aa).

Residues 1–21 (MGIFDWKHWIVILIVVVLVFG) form a helical membrane-spanning segment. Residues 41–91 (KAMNDDDKPAEQPAPQPQQAQPAPQGSPLNQPHTIDAQAHKVDEPIRKDQV) form a disordered region. Over residues 51–64 (EQPAPQPQQAQPAP) the composition is skewed to low complexity. Residues 78–91 (QAHKVDEPIRKDQV) are compositionally biased toward basic and acidic residues.

Belongs to the TatA/E family. The Tat system comprises two distinct complexes: a TatABC complex, containing multiple copies of TatA, TatB and TatC subunits, and a separate TatA complex, containing only TatA subunits. Substrates initially bind to the TatABC complex, which probably triggers association of the separate TatA complex to form the active translocon.

It localises to the cell inner membrane. In terms of biological role, part of the twin-arginine translocation (Tat) system that transports large folded proteins containing a characteristic twin-arginine motif in their signal peptide across membranes. TatA could form the protein-conducting channel of the Tat system. The protein is Sec-independent protein translocase protein TatA of Pseudomonas syringae pv. syringae (strain B728a).